The chain runs to 559 residues: Leucine-rich repeat protein soc-2 (559 aa).

Residues 1-17 are compositionally biased toward basic and acidic residues; it reads METSKEFEFRPAKETSR. Positions 1-55 are disordered; the sequence is METSKEFEFRPAKETSRSKSPGGIVGRLSNFARNKARHSLSEKGSNSVGGSGGSG. 20 LRR repeats span residues 74-95, 97-118, 120-141, 143-164, 166-187, 189-210, 212-233, 235-257, 258-279, 281-302, 305-326, 329-350, 353-374, 376-397, 399-420, 422-443, 445-466, 468-489, 491-513, and 515-536; these read QDQR…IKEL, QLTE…IGQL, NLKK…LSSL, SLET…IYKI, SLET…IGNL, KLKM…IGKL, SLVV…IGEC, ALTQ…GKLT, NLVR…LESC, QLEE…LLTM, KIHT…GPQQ, PTVT…IFSK, RLTK…MGSW, SITE…IEKL, NLEI…IGNL, KLRE…IGFL, HLTK…IGNL, SLQD…IGHL, SLKS…LALC, and SLEI…ITAG.

The protein belongs to the SHOC2 family. In terms of assembly, interacts with let-60.

Its function is as follows. Acts as a Ras effector and participates in MAPK pathway activation. Probably acts as a scaffolding protein in a protein phosphatase complex that specifically dephosphorylates Raf kinase and stimulates Raf activity at specialized signaling complexes upon Ras activation. Required for vulval development. Involved in fluid homeostasis. Plays a role in nicotinic acetylcholine receptor (nAChR)-mediated sensitivity to nicotine. The sequence is that of Leucine-rich repeat protein soc-2 (soc-2) from Caenorhabditis briggsae.